Here is a 184-residue protein sequence, read N- to C-terminus: Alpha-tubulin N-acetyltransferase (184 aa).

One can recognise an N-acetyltransferase domain in the interval 1–174; it reads MDTHGEKMKN…NNFVIFAEYF (174 aa). Acetyl-CoA is bound by residues 108–121 and 144–153; these read FYIR…GLGL and SHKLRSFLKK.

It belongs to the acetyltransferase ATAT1 family.

The enzyme catalyses L-lysyl-[alpha-tubulin] + acetyl-CoA = N(6)-acetyl-L-lysyl-[alpha-tubulin] + CoA + H(+). Specifically acetylates 'Lys-40' in alpha-tubulin on the lumenal side of microtubules. Promotes microtubule destabilization and accelerates microtubule dynamics; this activity may be independent of acetylation activity. Acetylates alpha-tubulin with a slow enzymatic rate, due to a catalytic site that is not optimized for acetyl transfer. Enters the microtubule through each end and diffuses quickly throughout the lumen of microtubules. Acetylates only long/old microtubules because of its slow acetylation rate since it does not have time to act on dynamically unstable microtubules before the enzyme is released. In Plasmodium vivax (strain Salvador I), this protein is Alpha-tubulin N-acetyltransferase.